A 230-amino-acid polypeptide reads, in one-letter code: Cytochrome c oxidase subunit 2 (230 aa).

Residues 1-14 (MAHPSQLGFQDAAS) are Mitochondrial intermembrane-facing. The chain crosses the membrane as a helical span at residues 15-45 (PVMEELLHFHDHALMIVLLISTLVLYIIVAM). Over 46-59 (VSTKLTNKYILDSQ) the chain is Mitochondrial matrix. The helical transmembrane segment at 60–87 (EIEIVWTVLPAVILILIALPSLRILYLM) threads the bilayer. At 88–230 (DEINDPHLTI…KWSTMMLEDA (143 aa)) the chain is on the mitochondrial intermembrane side. Residues histidine 161, cysteine 196, glutamate 198, cysteine 200, histidine 204, and methionine 207 each contribute to the Cu cation site. Glutamate 198 serves as a coordination point for Mg(2+).

It belongs to the cytochrome c oxidase subunit 2 family. As to quaternary structure, component of the cytochrome c oxidase (complex IV, CIV), a multisubunit enzyme composed of 14 subunits. The complex is composed of a catalytic core of 3 subunits MT-CO1, MT-CO2 and MT-CO3, encoded in the mitochondrial DNA, and 11 supernumerary subunits COX4I, COX5A, COX5B, COX6A, COX6B, COX6C, COX7A, COX7B, COX7C, COX8 and NDUFA4, which are encoded in the nuclear genome. The complex exists as a monomer or a dimer and forms supercomplexes (SCs) in the inner mitochondrial membrane with NADH-ubiquinone oxidoreductase (complex I, CI) and ubiquinol-cytochrome c oxidoreductase (cytochrome b-c1 complex, complex III, CIII), resulting in different assemblies (supercomplex SCI(1)III(2)IV(1) and megacomplex MCI(2)III(2)IV(2)). Found in a complex with TMEM177, COA6, COX18, COX20, SCO1 and SCO2. Interacts with TMEM177 in a COX20-dependent manner. Interacts with COX20. Interacts with COX16. It depends on Cu cation as a cofactor.

Its subcellular location is the mitochondrion inner membrane. It catalyses the reaction 4 Fe(II)-[cytochrome c] + O2 + 8 H(+)(in) = 4 Fe(III)-[cytochrome c] + 2 H2O + 4 H(+)(out). Its function is as follows. Component of the cytochrome c oxidase, the last enzyme in the mitochondrial electron transport chain which drives oxidative phosphorylation. The respiratory chain contains 3 multisubunit complexes succinate dehydrogenase (complex II, CII), ubiquinol-cytochrome c oxidoreductase (cytochrome b-c1 complex, complex III, CIII) and cytochrome c oxidase (complex IV, CIV), that cooperate to transfer electrons derived from NADH and succinate to molecular oxygen, creating an electrochemical gradient over the inner membrane that drives transmembrane transport and the ATP synthase. Cytochrome c oxidase is the component of the respiratory chain that catalyzes the reduction of oxygen to water. Electrons originating from reduced cytochrome c in the intermembrane space (IMS) are transferred via the dinuclear copper A center (CU(A)) of subunit 2 and heme A of subunit 1 to the active site in subunit 1, a binuclear center (BNC) formed by heme A3 and copper B (CU(B)). The BNC reduces molecular oxygen to 2 water molecules using 4 electrons from cytochrome c in the IMS and 4 protons from the mitochondrial matrix. This is Cytochrome c oxidase subunit 2 (mt-co2) from Salmo salar (Atlantic salmon).